Here is a 391-residue protein sequence, read N- to C-terminus: Putative F-box protein At1g47730 (391 aa).

Residues M1–Q12 show a composition bias toward basic and acidic residues. The segment at M1–L25 is disordered. The F-box domain occupies K19–R68.

The polypeptide is Putative F-box protein At1g47730 (Arabidopsis thaliana (Mouse-ear cress)).